Consider the following 122-residue polypeptide: Cupin 2 conserved barrel domain-containing protein (122 aa).

The interval 55–119 (PGGVTTAEDH…DSPVEIVSIW (65 aa)) is cupin 2 conserved barrel. Residues Asp-63, His-65, Glu-69, and His-103 each contribute to the Zn(2+) site.

Zn(2+) serves as cofactor.

The enzyme catalyses N(6)-hydroxy-L-lysine + L-glutamate + ATP = 1-L-glutamo-2-N(6-)L-lysinohydrazine + AMP + diphosphate + 2 H(+). Inhibited by 1,10-phenanthroline (OP). In terms of biological role, catalyzes hydrazine (N-N) bond formation from an unstable ester intermediate, the product of the ATP-dependent condensation of L-N(6)-OH-lysine and L-glutamine substrates by a methionyl-tRNA synthase-like protein. The sequence is that of Cupin 2 conserved barrel domain-containing protein from Rhodococcus jostii (strain RHA1).